Consider the following 345-residue polypeptide: Methylthioribose-1-phosphate isomerase 2 (345 aa).

Substrate contacts are provided by residues 47 to 49 (RGA), R88, and Q194. Residue D235 is the Proton donor of the active site. 245 to 246 (NK) is a substrate binding site.

It belongs to the eIF-2B alpha/beta/delta subunits family. MtnA subfamily.

It catalyses the reaction 5-(methylsulfanyl)-alpha-D-ribose 1-phosphate = 5-(methylsulfanyl)-D-ribulose 1-phosphate. Its pathway is amino-acid biosynthesis; L-methionine biosynthesis via salvage pathway; L-methionine from S-methyl-5-thio-alpha-D-ribose 1-phosphate: step 1/6. Functionally, catalyzes the interconversion of methylthioribose-1-phosphate (MTR-1-P) into methylthioribulose-1-phosphate (MTRu-1-P). This is Methylthioribose-1-phosphate isomerase 2 from Pseudothermotoga lettingae (strain ATCC BAA-301 / DSM 14385 / NBRC 107922 / TMO) (Thermotoga lettingae).